The following is a 280-amino-acid chain: uncharacterized protein (280 aa).

Disordered regions lie at residues 1–83 (MELK…EEEQ) and 248–280 (IRHR…EARL). The segment covering 12–25 (SAKTDNHTVYQNSP) has biased composition (polar residues). Composition is skewed to basic and acidic residues over residues 41-71 (KQTR…RVDD) and 249-280 (RHRE…EARL).

This sequence belongs to the chlamydial CPn_0705/CT_671/TC_0042 family.

This is an uncharacterized protein from Chlamydia pneumoniae (Chlamydophila pneumoniae).